Here is a 298-residue protein sequence, read N- to C-terminus: uncharacterized protein (298 aa).

This is an uncharacterized protein from Archaeoglobus fulgidus (strain ATCC 49558 / DSM 4304 / JCM 9628 / NBRC 100126 / VC-16).